A 351-amino-acid polypeptide reads, in one-letter code: D-alanine--D-alanine ligase (351 aa).

One can recognise an ATP-grasp domain in the interval 135 to 343; the sequence is NQIFLQSGQK…MEEVFSDLIE (209 aa). An ATP-binding site is contributed by 167 to 222; that stretch reads LETLGFPQFLKPVEGGSSVSVYKITNREQLKEKLALIFESDSKVMSQSFLTGIEVS. Residues aspartate 298, glutamate 310, and asparagine 312 each coordinate Mg(2+).

It belongs to the D-alanine--D-alanine ligase family. It depends on Mg(2+) as a cofactor. Requires Mn(2+) as cofactor.

It localises to the cytoplasm. The enzyme catalyses 2 D-alanine + ATP = D-alanyl-D-alanine + ADP + phosphate + H(+). Its pathway is cell wall biogenesis; peptidoglycan biosynthesis. Functionally, cell wall formation. In Leptospira interrogans serogroup Icterohaemorrhagiae serovar Lai (strain 56601), this protein is D-alanine--D-alanine ligase.